The primary structure comprises 135 residues: Ribosome-binding factor A (135 aa).

It belongs to the RbfA family. Monomer. Binds 30S ribosomal subunits, but not 50S ribosomal subunits or 70S ribosomes.

Its subcellular location is the cytoplasm. In terms of biological role, one of several proteins that assist in the late maturation steps of the functional core of the 30S ribosomal subunit. Associates with free 30S ribosomal subunits (but not with 30S subunits that are part of 70S ribosomes or polysomes). Required for efficient processing of 16S rRNA. May interact with the 5'-terminal helix region of 16S rRNA. In Aliivibrio fischeri (strain MJ11) (Vibrio fischeri), this protein is Ribosome-binding factor A.